The following is a 474-amino-acid chain: ATP synthase subunit beta 2 (474 aa).

153 to 160 (GGAGVGKT) contacts ATP.

It belongs to the ATPase alpha/beta chains family. F-type ATPases have 2 components, CF(1) - the catalytic core - and CF(0) - the membrane proton channel. CF(1) has five subunits: alpha(3), beta(3), gamma(1), delta(1), epsilon(1). CF(0) has three main subunits: a(1), b(2) and c(9-12). The alpha and beta chains form an alternating ring which encloses part of the gamma chain. CF(1) is attached to CF(0) by a central stalk formed by the gamma and epsilon chains, while a peripheral stalk is formed by the delta and b chains.

It localises to the cell inner membrane. It carries out the reaction ATP + H2O + 4 H(+)(in) = ADP + phosphate + 5 H(+)(out). In terms of biological role, produces ATP from ADP in the presence of a proton gradient across the membrane. The catalytic sites are hosted primarily by the beta subunits. The sequence is that of ATP synthase subunit beta 2 from Syntrophotalea carbinolica (strain DSM 2380 / NBRC 103641 / GraBd1) (Pelobacter carbinolicus).